A 256-amino-acid polypeptide reads, in one-letter code: Acetyl-coenzyme A carboxylase carboxyl transferase subunit alpha (256 aa).

The CoA carboxyltransferase C-terminal domain occupies 1–236 (MTDVARILKE…KEHLKTEINQ (236 aa)).

This sequence belongs to the AccA family. Acetyl-CoA carboxylase is a heterohexamer composed of biotin carboxyl carrier protein (AccB), biotin carboxylase (AccC) and two subunits each of ACCase subunit alpha (AccA) and ACCase subunit beta (AccD).

The protein resides in the cytoplasm. It catalyses the reaction N(6)-carboxybiotinyl-L-lysyl-[protein] + acetyl-CoA = N(6)-biotinyl-L-lysyl-[protein] + malonyl-CoA. It functions in the pathway lipid metabolism; malonyl-CoA biosynthesis; malonyl-CoA from acetyl-CoA: step 1/1. Its function is as follows. Component of the acetyl coenzyme A carboxylase (ACC) complex. First, biotin carboxylase catalyzes the carboxylation of biotin on its carrier protein (BCCP) and then the CO(2) group is transferred by the carboxyltransferase to acetyl-CoA to form malonyl-CoA. This chain is Acetyl-coenzyme A carboxylase carboxyl transferase subunit alpha, found in Streptococcus uberis (strain ATCC BAA-854 / 0140J).